The following is a 404-amino-acid chain: Multidrug resistance protein MdtG (404 aa).

Transmembrane regions (helical) follow at residues 19–39, 56–76, 90–110, 113–133, 144–164, 171–191, 222–242, 254–274, 288–308, 317–337, and 376–396; these read LGCF…PLYV, LVFS…GGLA, LGMA…QFLI, ALLG…ATQA, TLST…GLLA, PVFF…FFFI, LFVT…ILTL, IAFI…LSAP, ILIV…FVQT, FLLG…LVYN, and AVFC…WNSL.

Belongs to the major facilitator superfamily. DHA1 family. MdtG (TC 2.A.1.2.20) subfamily.

It localises to the cell inner membrane. The sequence is that of Multidrug resistance protein MdtG from Salmonella paratyphi A (strain ATCC 9150 / SARB42).